The following is a 236-amino-acid chain: uncharacterized protein (236 aa).

The segment at 1–29 (MNNEKNKQDRENLNRQDERKSSEIKSERK) is disordered.

This is an uncharacterized protein from Staphylococcus aureus.